Here is a 295-residue protein sequence, read N- to C-terminus: Ethanolamine ammonia-lyase small subunit (295 aa).

The adenosylcob(III)alamin site is built by V207, E228, and C258.

The protein belongs to the EutC family. In terms of assembly, the basic unit is a heterodimer which dimerizes to form tetramers. The heterotetramers trimerize; 6 large subunits form a core ring with 6 small subunits projecting outwards. The cofactor is adenosylcob(III)alamin.

It localises to the bacterial microcompartment. The enzyme catalyses ethanolamine = acetaldehyde + NH4(+). The protein operates within amine and polyamine degradation; ethanolamine degradation. Its function is as follows. Catalyzes the deamination of various vicinal amino-alcohols to oxo compounds. Allows this organism to utilize ethanolamine as the sole source of nitrogen and carbon in the presence of external vitamin B12. In Escherichia coli O7:K1 (strain IAI39 / ExPEC), this protein is Ethanolamine ammonia-lyase small subunit.